The chain runs to 98 residues: NADH-ubiquinone oxidoreductase chain 4L (98 aa).

A run of 3 helical transmembrane segments spans residues 1–21, 29–49, and 61–81; these read MSLV…GLLM, SLLC…LMIL, and IILL…LVMV.

This sequence belongs to the complex I subunit 4L family. Core subunit of respiratory chain NADH dehydrogenase (Complex I) which is composed of 45 different subunits.

The protein localises to the mitochondrion inner membrane. It catalyses the reaction a ubiquinone + NADH + 5 H(+)(in) = a ubiquinol + NAD(+) + 4 H(+)(out). Functionally, core subunit of the mitochondrial membrane respiratory chain NADH dehydrogenase (Complex I) which catalyzes electron transfer from NADH through the respiratory chain, using ubiquinone as an electron acceptor. Part of the enzyme membrane arm which is embedded in the lipid bilayer and involved in proton translocation. This chain is NADH-ubiquinone oxidoreductase chain 4L (MT-ND4L), found in Capra hircus (Goat).